The sequence spans 339 residues: Phenylalanine--tRNA ligase alpha subunit (339 aa).

Residue Glu-250 coordinates Mg(2+).

It belongs to the class-II aminoacyl-tRNA synthetase family. Phe-tRNA synthetase alpha subunit type 1 subfamily. As to quaternary structure, tetramer of two alpha and two beta subunits. Mg(2+) serves as cofactor.

The protein localises to the cytoplasm. It carries out the reaction tRNA(Phe) + L-phenylalanine + ATP = L-phenylalanyl-tRNA(Phe) + AMP + diphosphate + H(+). This Parabacteroides distasonis (strain ATCC 8503 / DSM 20701 / CIP 104284 / JCM 5825 / NCTC 11152) protein is Phenylalanine--tRNA ligase alpha subunit.